The sequence spans 299 residues: tRNA dimethylallyltransferase (299 aa).

ATP is bound at residue 22–29 (GPTASGKT). 24 to 29 (TASGKT) serves as a coordination point for substrate. Interaction with substrate tRNA regions lie at residues 47–50 (DSRQ) and 172–176 (QRLLR).

This sequence belongs to the IPP transferase family. Monomer. Requires Mg(2+) as cofactor.

The enzyme catalyses adenosine(37) in tRNA + dimethylallyl diphosphate = N(6)-dimethylallyladenosine(37) in tRNA + diphosphate. Its function is as follows. Catalyzes the transfer of a dimethylallyl group onto the adenine at position 37 in tRNAs that read codons beginning with uridine, leading to the formation of N6-(dimethylallyl)adenosine (i(6)A). The sequence is that of tRNA dimethylallyltransferase from Endomicrobium trichonymphae.